A 153-amino-acid chain; its full sequence is Arginine repressor (153 aa).

The protein belongs to the ArgR family.

It localises to the cytoplasm. Its pathway is amino-acid biosynthesis; L-arginine biosynthesis [regulation]. Functionally, regulates arginine biosynthesis genes. This is Arginine repressor from Acetivibrio thermocellus (strain ATCC 27405 / DSM 1237 / JCM 9322 / NBRC 103400 / NCIMB 10682 / NRRL B-4536 / VPI 7372) (Clostridium thermocellum).